A 418-amino-acid polypeptide reads, in one-letter code: Actin-related protein 3 (418 aa).

The residue at position 2 (alanine 2) is an N-acetylalanine. An N6-acetyllysine mark is found at lysine 240, lysine 244, lysine 251, and lysine 254.

This sequence belongs to the actin family. ARP3 subfamily. In terms of assembly, component of the Arp2/3 complex composed of ACTR2/ARP2, ACTR3/ARP3, ARPC1B/p41-ARC, ARPC2/p34-ARC, ARPC3/p21-ARC, ARPC4/p20-ARC and ARPC5/p16-ARC. Interacts with WHDC1. Interacts weakly with MEFV. Interacts with AVIL. (Microbial infection) Interacts with bacterium B.thailandensis BimA.

It is found in the cytoplasm. The protein localises to the cytoskeleton. Its subcellular location is the cell projection. It localises to the nucleus. In terms of biological role, ATP-binding component of the Arp2/3 complex, a multiprotein complex that mediates actin polymerization upon stimulation by nucleation-promoting factor (NPF). The Arp2/3 complex mediates the formation of branched actin networks in the cytoplasm, providing the force for cell motility. Seems to contact the pointed end of the daughter actin filament. In podocytes, required for the formation of lamellipodia downstream of AVIL and PLCE1 regulation. In addition to its role in the cytoplasmic cytoskeleton, the Arp2/3 complex also promotes actin polymerization in the nucleus, thereby regulating gene transcription and repair of damaged DNA. The Arp2/3 complex promotes homologous recombination (HR) repair in response to DNA damage by promoting nuclear actin polymerization, leading to drive motility of double-strand breaks (DSBs). Plays a role in ciliogenesis. This Mus musculus (Mouse) protein is Actin-related protein 3 (Actr3).